Here is a 443-residue protein sequence, read N- to C-terminus: MGKLFGTDGVRGVANRDLTPELAYKLGRAAAYVLKKKYNGQGIVVGKDTRISGDMLETALAAGILSVGLNVLRVGVMPTPAIAYLTRELKATAGAVISASHNPMEDNGIKFFSGSGFKLPDEVEEEIEKYVLGEKEIPIRPIGAEIGRVREISDAVLLYKSFAKNTVELPFSGLRVVVDCANGAASYVAPKIYEELGAEVIPIFNTPDGTNINANCGSTHPEALMRAVVEEGAHLGLAHDGDADRVLAVDEKGNLVDGDQIMVIIGKYLKKKGLLKNNRIVVTVMSNLGLKKAFAREGIEVLETKVGDRYVLEEMLKNGAIIGGEQSGHIILLDHNTTGDGIITALQLMQVIVAEGKKLSELAQEMPKFPQVLKNVRVLDKEKIMASEELAKAIARGEKKLGEGRILVRPSGTEPLIRVMAEGADAKLTEEVVDEIIAVIEKL.

The active-site Phosphoserine intermediate is the Ser100. Mg(2+) contacts are provided by Ser100, Asp240, Asp242, and Asp244. Position 100 is a phosphoserine (Ser100).

Belongs to the phosphohexose mutase family. It depends on Mg(2+) as a cofactor. Post-translationally, activated by phosphorylation.

It carries out the reaction alpha-D-glucosamine 1-phosphate = D-glucosamine 6-phosphate. In terms of biological role, catalyzes the conversion of glucosamine-6-phosphate to glucosamine-1-phosphate. The polypeptide is Phosphoglucosamine mutase (Carboxydothermus hydrogenoformans (strain ATCC BAA-161 / DSM 6008 / Z-2901)).